The chain runs to 788 residues: MVNPVRKLIENPKRQLHKYEHLADLTEAHADEMAALSDKQLQAKTDEFKSRYKNGETLDQLLPEAFAAVREADKRVLGLYPFRVQIIGGAVLHGGNIAEMKTGEGKTLTATMPVYLNALPGDGVHVVTVNEYLTQYQAEEMGQVYKFMGLSIGVNLNEMPNDEKRAAFACDITYTTNSAIGFDYLRDNMAQTMEERVVRSLNYVLIDEADSILIDSARTPLIIGGSSDNVNMFYQRADRFVKTLDEGEDKDYTVDEEQKTAMLTNQGIHKAEIFFNIDNLYDDQNVALAHFIETALRANYSFFRDKDYVVRDGEVKLIDQFTGRISEGTRMSDGLHQAFEAKEGVEIQGEGTTLASITLQNFFRMYKKISGMTGTAKTEEEELKEIYNMEVVQVPTNEPVRRVDEPDVLYFNLRGKFNAVVDEIDRLYKKGQPVLVGTVSVDTSELLSQMLDKKGIQHNVLNAKNNAKEAEIVAQAGQRGAVTIATNMAGRGTDIKLGPGVADLGGLAVIGTERHESRRIDNQLRGRSGRQGDPGFSRFYLSLEDDLMVRFGADRIKQMMQRMNLDNDDSVVKNRMISRSIESAQKRVEGNNYDTRKQVLQYDDVMRQQREIIYDERTQIMKSTESLKSIFLPMVYRTIDRVVNAHTTGQQKDWDLLSIVDFVDNALDNSGEITVADLNGKSLNDIKVLLYDLANREFFAKQDALSDKEQMVNFEKTIMLRSIDQHWMQHIDDMDRLRQSVMIRSYGQYNPLIEYQTAAFSTYNKMIDDIEYDTTRLFMKAQVRQNLH.

ATP contacts are provided by residues glutamine 85, 103–107 (GEGKT), and aspartate 494.

It belongs to the SecA family. In terms of assembly, monomer and homodimer. Part of the essential Sec protein translocation apparatus which comprises SecA, SecYEG and auxiliary proteins SecDF. Other proteins may also be involved.

It localises to the cell membrane. Its subcellular location is the cytoplasm. The enzyme catalyses ATP + H2O + cellular proteinSide 1 = ADP + phosphate + cellular proteinSide 2.. Functionally, part of the Sec protein translocase complex. Interacts with the SecYEG preprotein conducting channel. Has a central role in coupling the hydrolysis of ATP to the transfer of proteins into and across the cell membrane, serving as an ATP-driven molecular motor driving the stepwise translocation of polypeptide chains across the membrane. The protein is Protein translocase subunit SecA of Oenococcus oeni (strain ATCC BAA-331 / PSU-1).